The primary structure comprises 147 residues: Transcription elongation factor Spt5 (147 aa).

Residues 91-122 (KGDVVEIIAGPFKGERAKVIRVDKHKEEVTLE) form the KOW domain.

Belongs to the archaeal Spt5 family. In terms of assembly, heterodimer composed of Spt4 and Spt5. Interacts with RNA polymerase (RNAP). Forms a homodimer in solution.

Its function is as follows. Stimulates transcription elongation. This is Transcription elongation factor Spt5 from Methanocaldococcus jannaschii (strain ATCC 43067 / DSM 2661 / JAL-1 / JCM 10045 / NBRC 100440) (Methanococcus jannaschii).